A 94-amino-acid chain; its full sequence is Ig kappa-B5 chain V region 2699 (94 aa).

The framework-1 stretch occupies residues 1 to 23 (AFELTQTPSSVEAAVGGTVTINC). Positions 24–34 (QASTDISSNLA) are complementarity-determining-1. Residues 35–49 (WYTPKPGSPPKLLIY) are framework-2. The segment at 50–56 (SASTLAS) is complementarity-determining-2. The framework-3 stretch occupies residues 57–82 (GVSSRFKGSGSGVLITLTISDLECGV). Residue serine 83 is a region of interest, complementarity-determining-3. Residues 84–93 (FGGGTKVVVE) are framework-4.

This is Ig kappa-B5 chain V region 2699 from Oryctolagus cuniculus (Rabbit).